The sequence spans 1036 residues: Putative GPI-anchored protein pfl2 (1036 aa).

The N-terminal stretch at 1–23 is a signal peptide; the sequence is MKFFTASTLFLLAAQSLNSGVSA. Residues N66, N97, N165, N201, N233, N259, N277, N296, N312, N331, N347, N363, N379, N395, N410, N429, N445, N461, N477, N493, N509, N524, N543, N559, and N573 are each glycosylated (N-linked (GlcNAc...) asparagine). 2 disordered regions span residues 88–130 and 147–183; these read SSSL…SSLA and SSLA…SLSS. Residues 243–585 are compositionally biased toward low complexity; it reads SSISSTVSSS…ITSSASGSTG (343 aa). The disordered stretch occupies residues 243–710; the sequence is SSISSTVSSS…PLSNSTVAPT (468 aa). Polar residues predominate over residues 586 to 595; sequence EFTNTNSGNG. Low complexity predominate over residues 597–630; sequence VSGSVTTPTSTPLSNSTVAPTSTFTSSGFNTTSG. N611, N626, N642, N657, N673, N688, N704, N719, and N735 each carry an N-linked (GlcNAc...) asparagine glycan. Residues 631–647 are compositionally biased toward polar residues; the sequence is LPTSSASTPLSNSTVAP. Residues 648–692 are compositionally biased toward low complexity; the sequence is TSTFTSSGFNTTSGLPTSSASTPSSNSSIVPTSTFTSSGFNTTSG. A compositionally biased stretch (polar residues) spans 693 to 709; it reads LPTSSASTPLSNSTVAP. Composition is skewed to low complexity over residues 722–831, 838–862, and 885–906; these read SGLP…TTAS, PTAA…ATYT, and IPVN…SFTP. Disordered stretches follow at residues 722-862 and 885-918; these read SGLP…ATYT and IPVN…SYSN. N918, N924, N930, N933, N939, N947, and N977 each carry an N-linked (GlcNAc...) asparagine glycan. The interval 978–1011 is disordered; sequence TTATSGSDDDVKTASTSSSTSYTSSSSSSSSTTS. A compositionally biased stretch (low complexity) spans 990-1011; the sequence is TASTSSSTSYTSSSSSSSSTTS. S1011 is lipidated: GPI-anchor amidated serine. The propeptide at 1012 to 1036 is removed in mature form; sequence AASSKASVSMGLNGLMIAAVILLVA.

The protein resides in the cell membrane. May be involved in agglutination during conjugation or other aspects of colony formation. Induces flocculation when overexpressed. The protein is Putative GPI-anchored protein pfl2 of Schizosaccharomyces pombe (strain 972 / ATCC 24843) (Fission yeast).